A 219-amino-acid polypeptide reads, in one-letter code: Factor in the germline alpha (219 aa).

One can recognise a bHLH domain in the interval 65 to 117 (ERRRVANAKERERIKNLNRGFARLKALVPFLPQSRKPSKVDILKGATEYIQVL). A disordered region spans residues 124 to 151 (AKDSKKQDPDEQSYSNNSSESHTSSARQ). A compositionally biased stretch (low complexity) spans 136–148 (SYSNNSSESHTSS).

Heterodimer with TCF3/isoform E12. As to expression, germ cells. Expressed in the fetal ovary, but not by a range of other tissues. Expression increases across mid-gestation, rising some 40-fold by the time of primordial follicle formation.

It is found in the nucleus. In terms of biological role, germline specific transcription factor implicated in postnatal oocyte-specific gene expression. Plays a key regulatory role in the expression of multiple oocyte-specific genes, including those that initiate folliculogenesis and those that encode the zona pellucida (ZP1, ZP2 and ZP3) required for fertilization and early embryonic survival. Essential for oocytes to survive and form primordial follicles. The persistence of FIGLA in adult females suggests that it may regulate additional pathways that are essential for normal ovarian development. Binds to the E-box (5'-CANNTG-3') of the ZPs (ZP1, ZP2, ZP3) promoters. This Homo sapiens (Human) protein is Factor in the germline alpha (FIGLA).